The sequence spans 87 residues: Small ribosomal subunit protein bS20 (87 aa).

The segment covering 1-11 has biased composition (basic residues); sequence MANIKSAKKRA. The segment at 1–26 is disordered; the sequence is MANIKSAKKRAVQSEKRRQHNASQRS.

The protein belongs to the bacterial ribosomal protein bS20 family.

Functionally, binds directly to 16S ribosomal RNA. This Actinobacillus pleuropneumoniae serotype 5b (strain L20) protein is Small ribosomal subunit protein bS20.